Here is a 297-residue protein sequence, read N- to C-terminus: MSAKETIEKLKKARIITALVTPFKENGQINFEAFPKLVEDLLASHTEGLILAGTTAESPTLTHDEELEIFASINQLVDGRVPLIAGIGTNDTRDSVEFIKEVAKLGYIDAGLAVTPYYNKPSQEGIYQHFKAIATASDLPIILYNIPGRVVTEILPDTILRLAQLENVIAVKECTSTDNLAYLIENVPEDFLVYTGEDGLAFHAKTLGGQGVISVASHILGQEFFEMFAEIDQGSIQKAATIQRKILPKINALFSVTSPAPIKTVLNNKGYAVGGLRLPLVACTDQEAKIIIEQIEN.

Thr-55 lines the pyruvate pocket. The active-site Proton donor/acceptor is the Tyr-144. The active-site Schiff-base intermediate with substrate is the Lys-172. Ile-213 lines the pyruvate pocket.

This sequence belongs to the DapA family. In terms of assembly, homotetramer; dimer of dimers.

The protein localises to the cytoplasm. It catalyses the reaction L-aspartate 4-semialdehyde + pyruvate = (2S,4S)-4-hydroxy-2,3,4,5-tetrahydrodipicolinate + H2O + H(+). It functions in the pathway amino-acid biosynthesis; L-lysine biosynthesis via DAP pathway; (S)-tetrahydrodipicolinate from L-aspartate: step 3/4. In terms of biological role, catalyzes the condensation of (S)-aspartate-beta-semialdehyde [(S)-ASA] and pyruvate to 4-hydroxy-tetrahydrodipicolinate (HTPA). The chain is 4-hydroxy-tetrahydrodipicolinate synthase from Lactococcus lactis subsp. cremoris (strain MG1363).